The following is a 1033-amino-acid chain: NACHT, LRR and PYD domains-containing protein 3 (1033 aa).

A Pyrin domain is found at 1–91 (MTSVRCKLAQ…WEKAKKDQPE (91 aa)). Position 3 is a phosphoserine (Ser3). Residues Cys6 and Cys104 are joined by a disulfide bond. Tyr11 carries the phosphotyrosine modification. Residue Cys126 is the site of S-palmitoyl cysteine attachment. Positions 127-130 (KKKK) are required for binding to phosphatidylinositol 4-phosphate (PtdIns4P). Phosphotyrosine; by BTK occurs at positions 132, 136, and 145. The FISNA domain maps to 136-206 (YRRHVRSRFY…SSLKLELLFE (71 aa)). Phosphoserine is present on Ser157. Tyr164 is modified (phosphotyrosine; by BTK). Thr165 provides a ligand contact to ATP. The residue at position 194 (Ser194) is a Phosphoserine; by MAPK8. Position 197 is a phosphoserine (Ser197). One can recognise an NACHT domain in the interval 216–532 (HTVVFQGAAG…EFFAAMYYLL (317 aa)). Residue 222–230 (GAAGIGKTI) coordinates ATP. Phosphoserine is present on Ser261. The residue at position 291 (Ser291) is a Phosphoserine; by PKD/PRKD1. Lys320 is covalently cross-linked (Glycyl lysine isopeptide (Lys-Gly) (interchain with G-Cter in ubiquitin)). A Phosphoserine modification is found at Ser330. A KFERQ-like motif 1 motif is present at residues 351–355 (LEKLQ). Lys426 is covalently cross-linked (Glycyl lysine isopeptide (Lys-Gly) (interchain with G-Cter in ubiquitin)). An ATP-binding site is contributed by His518. The KFERQ-like motif 2 signature appears at 601 to 605 (QVRLE). Residue Lys687 forms a Glycyl lysine isopeptide (Lys-Gly) (interchain with G-Cter in ubiquitin) linkage. Residues Ser725 and Ser732 each carry the phosphoserine modification. LRR repeat units follow at residues 739-759 (SLTELDLSDNTLGDPGMRVLC), 768-789 (NIQRLWLGRCGLSHQCCFDISS), 796-816 (KLVELDLSDNALGDFGIRLLC), 825-846 (NLQKLWLVSCCLTSACCQDLAL), and 853-873 (SLTRLYIGENALGDSGVQVLC). The KFERQ-like motif 3 motif lies at 795–799 (QKLVE). Ser803 is subject to Phosphoserine; by CSNK1A1. S-palmitoyl cysteine attachment occurs at residues Cys834, Cys835, and Cys841. Phosphotyrosine is present on Tyr858. A Glycyl lysine isopeptide (Lys-Gly) (interchain with G-Cter in ubiquitin) cross-link involves residue Lys875. LRR repeat units follow at residues 882–903 (NLQKLGLVNSGLTSICCSALTS), 910–930 (NFTHLYLRSNALGDTGLRLLC), 939–960 (KLQMLELDNCSLTSHSCWNLST), and 967–988 (SLRKLNLGNNDLGDLCVVTLCE). A lipid anchor (S-palmitoyl cysteine) is attached at Cys955. A Glycyl lysine isopeptide (Lys-Gly) (interchain with G-Cter in ubiquitin) cross-link involves residue Lys970. A KFERQ-like motif 4 motif is present at residues 988–992 (EVLKQ). A Phosphoserine modification is found at Ser1032.

Belongs to the NLRP family. In terms of assembly, sensor component of NLRP3 inflammasomes; inflammasomes are supramolecular complexes that assemble in the cytosol in response to pathogens and other damage-associated signals and play critical roles in innate immunity and inflammation. The core of NLRP3 inflammasomes consists of a signal sensor component (NLRP3), an adapter (PYCARD/ASC), which recruits an effector pro-inflammatory caspase (CASP1 and, possibly, CASP4 and CASP5). Homodecamer; inactive NLRP3 forms homodecameric double-ring cages that hide pyrin domains within NACHT-LRR rings to avoid premature activation. Interacts (via pyrin domain) with PYCARD/ASC (via pyrin domain); interaction is direct. Interacts (via LRR repeat domain) with NEK7 (via N-terminus); the interaction is required for the formation of the complex NLRP3:PYCARD, oligomerization of PYCARD/ASC and activation of CASP1. Interacts (via LRR repeat domain) with NR4A1/Nur77 (via N-terminus); the interaction is direct, requires activation of NR4A1 by its ligands NBRE-containing dsDNA and lipopolysaccharide, and stimulates the association of NLRP3 with NEK7 for non-canonical NLRP3 inflammasome activation. Interacts with CARD8; leading to inhibit formation of the NLRP3 inflammasome. Interacts with MEFV; this interaction targets NLRP3 to degradation by autophagy, hence preventing excessive IL1B- and IL18-mediated inflammation. Interacts with EIF2AK2/PKR; this interaction requires EIF2AK2 activity, is accompanied by EIF2AK2 autophosphorylation and promotes inflammasome assembly in response to specific stimuli. Interacts with GBP5 (via DAPIN domain); this interaction promotes inflammasome assembly in response to microbial and soluble, but not crystalline, agents. Interacts with PML (isoform PML-1) (via the leucine-rich repeat (LRR) domain); PML-mediated increase in NLRP3 inflammasome activation does not depend upon this interaction. Interacts (via NACHT domain) with DHX33 (via DEAH box); NLRP3 activation in presence of cytosolic dsRNA is mediated by DHX33. Interacts (via NACHT and LRR domains) with ARRB2; this interaction is direct and inducible by polyunsaturated fatty acids (PUFAs). Interacts (via NACHT domain) with DDX3X under both LPS-primed and inflammasome-activating conditions. Interacts with IRF4 (via the LRR domain); this interaction is direct and is required for optimal IRF4 binding to IL4 promoter and efficient IL4 transactivation during differentiation of Th2 helper T-cells. Interacts with MAVS; promoting localization to mitochondria and activation of the NLRP3 inflammasome. Interacts with MARK4; promoting localization of NLRP3 to the microtubule organizing center (MTOC). Interacts with TRIM50; this interaction also promotes NLRP3 oligomerization and subsequent inflammasome activation. Interacts with IRGM; preventing NLRP3 inflammasome assembly and promoting NLRP3 degradation. Interacts (via KFERQ-like motifs) with HSPA8/HSC70; promoting NLRP3 degradation by the chaperone-mediated autophagy pathway. Interacts (via NACHT and LLR domains) with ABHD8; this interaction is enhanced in the presence of NLRP3 inflammasome inducers, such as ATP, nigericin, silica, or alum. Interaction with ABHD8 leads the recruitment of ZDHHC12, hence facilitating NLRP3 palmitoylation and degradation by the chaperone-mediated autophagy pathway (CMA), therefore attenuating NLRP3 inflammasome activation. In terms of processing, phosphorylation at Ser-194 by MAPK8/JNK1 increases inflammasome activation by promoting deubiquitination by BRCC3 and NLRP3 homooligomerization. Phosphorylation at Ser-803 by CSNK1A1 prevents inflammasome activation by preventing NEK7 recruitment. Phosphorylation at Ser-3 in the pyrin domain inhibits homomultimerization of NLRP3 and activation of the NLRP3 inflammasome: dephosphorylation by protein phosphatase 2A (PP2A) promotes assembly of the NLRP3 inflammasome. Phosphorylation at Ser-291 by PKD/PRKD1 promotes NLRP3 inflammasome assembly. Phosphorylation by ERK1/MAPK3 promotes NLRP3 inflammasome assembly. Phosphorylation by BTK (at Tyr-132, Tyr-136, Tyr-145 and Tyr-164) in the region that mediates binding to phosphatidylinositol phosphate, promotes relocalization of NLRP3 and assembly of the NLRP3 inflammasome. Phosphorylation at Tyr-858 inhibits NLRP3 inflammasome assembly: dephosphorylation by PTPN22 promotes inflammasome activation Phosphorylated by LATS1 and LATS2 at Ser-261 following palmitoylation by ZDHHC1, promoting its relocalization to the microtubule organizing center (MTOC), where NLRP3 is activated by NEK7, leading to inflammasome assembly and activation. Ubiquitinated; undergoes both 'Lys-48'- and 'Lys-63'-linked polyubiquitination. Ubiquitination does not lead to degradation, but inhibits inflammasome activation. Deubiquitination is catalyzed by BRCC3 and associated with NLRP3 activation and inflammasome assembly. This process can be induced by the activation of Toll-like receptors (by LPS), through a non-transcriptional pathway dependent on the mitochondrial production of reactive oxygen species, and by ATP. Ubiquitinated by TRIM31 via 'Lys-48'-linked ubiquitination, leading to its degradation by the proteasome. Ubiquitinated at Lys-687 by the SCF(FBXL2) complex, leading to its degradation by the proteasome. Ubiquitinated by TRIM35 via 'lys-48' and 'Lys-63'-linked ubiquitination leading to inhibition of NLRP3 inflammasome activation. Undergoes 'Lys-27'-linked polyubiquitination by MARCHF5, leading to NLRP3-NEK7 complex formation and NLRP3 oligomerization. Post-translationally, the disulfide bond in the pyrin domain might play a role in reactive oxygen species-mediated activation. In terms of processing, palmitoylation by ZDHHC12 promotes NLRP3 degradation by the chaperone-mediated autophagy pathway (CMA) and therefore limits NLRP3 inflammasome activation. Interaction with ZDHHC12, and hence NLRP3 palmitoylation, is enhanced by ABHD8. Following palmitoylation, HSPA8/HSC70 recognizes and binds the KFERQ-like motifs on NLRP3 and promotes NLRP3 recruitment to lysosomes, where it is degraded via the chaperone-mediated autophagy pathway in a LAMP2-dependent process. Palmitoylation at Cys-834 and Cys-835 by ZDHHC5 enhances its binding to NEK7 leading to inflammasome assembly and activation. Palmitoylation at Cys-126 and Cys-955 by ZDHHC1 facilitates phosphorylation at Ser-261 by LATS1 and LATS2, promoting its relocalization to the microtubule organizing center (MTOC), where NLRP3 is activated by NEK7, leading to inflammasome assembly and activation. Depalmitoylated by ABHD17A. Degraded via selective autophagy following interaction with Irgm1. Irgm1 promotes NLRP3 recruitment to autophagosome membranes, promoting its SQSTM1/p62-dependent autophagy-dependent degradation. In terms of tissue distribution, expressed with high levels in peripheral blood leukocytes, including Th2 lymphocytes and macrophages. Expressed at low levels in resting osteoblasts (at protein level).

It is found in the cytoplasm. The protein localises to the cytosol. Its subcellular location is the inflammasome. The protein resides in the cytoskeleton. It localises to the microtubule organizing center. It is found in the golgi apparatus membrane. The protein localises to the endoplasmic reticulum. Its subcellular location is the mitochondrion. The protein resides in the secreted. It localises to the nucleus. It carries out the reaction ATP + H2O = ADP + phosphate + H(+). Its activity is regulated as follows. Under resting conditions, NLRP3 binds ADP and is autoinhibited. Inactive NLRP3 forms homodecameric double-ring cages that hide pyrin domains within NACHT-LRR rings to avoid premature activation. NLRP3 activation stimuli include extracellular ATP, nigericin, reactive oxygen species, crystals of monosodium urate or cholesterol, amyloid-beta fibers, environmental or industrial particles and nanoparticles, such as asbestos, silica, aluminum salts, cytosolic dsRNA, etc. Almost all stimuli trigger intracellular K(+) efflux. These stimuli lead to membrane perturbations that induce activation of NLRP3. Upon activation, NLRP3 is transported to microtubule organizing center (MTOC), where it is unlocked by NEK7, leading to its relocalization to dispersed trans-Golgi network (dTGN) vesicle membranes and recruitment of PYCARD/ASC for the formation of an active inflammasome complex. NEK7-activated NLRP3 forms a disk-shaped inflammasome. NLRP3 and PYCARD/ASC interact via their respective pyrin domains; interaction initiates speck formation (nucleation) which greatly enhances further addition of soluble PYCARD/ASC molecules to the speck in a prion-like polymerization process. Clustered PYCARD/ASC nucleates the formation of CASP1 filaments through the interaction of their respective CARD domains, acting as a platform for CASP1 polymerization and activation. Active CASP1 then processes IL1B and IL18 precursors, leading to the release of mature cytokines in the extracellular milieu and inflammatory response. NLRP3 inflammasome assembly is inhibited by IRGM, which impedes NLRP3 oligomerization. NLRP3 inflammasome is inhibited by cyclic AMP (cAMP), which directly binds NLRP3; inhibition is relieved by calcium-sensing receptor CASR, which inhibits production of cAMP. Specifically inhibited by sulfonylurea MCC950 (also named CP-456,773, CRID3), a potent and specific small-molecule inhibitor of the NLRP3 inflammasome that acts by preventing ATP hydrolysis. Sensor component of the NLRP3 inflammasome, which mediates inflammasome activation in response to defects in membrane integrity, leading to secretion of inflammatory cytokines IL1B and IL18 and pyroptosis. In response to pathogens and other damage-associated signals that affect the integrity of membranes, initiates the formation of the inflammasome polymeric complex composed of NLRP3, CASP1 and PYCARD/ASC. Recruitment of pro-caspase-1 (proCASP1) to the NLRP3 inflammasome promotes caspase-1 (CASP1) activation, which subsequently cleaves and activates inflammatory cytokines IL1B and IL18 and gasdermin-D (GSDMD), promoting cytokine secretion and pyroptosis. Activation of NLRP3 inflammasome is also required for HMGB1 secretion; stimulating inflammatory responses. Under resting conditions, ADP-bound NLRP3 is autoinhibited. NLRP3 activation stimuli include extracellular ATP, nigericin, reactive oxygen species, crystals of monosodium urate or cholesterol, amyloid-beta fibers, environmental or industrial particles and nanoparticles, such as asbestos, silica, aluminum salts, cytosolic dsRNA, etc. Almost all stimuli trigger intracellular K(+) efflux. These stimuli lead to membrane perturbation and activation of NLRP3. Upon activation, NLRP3 is transported to microtubule organizing center (MTOC), where it is unlocked by NEK7, leading to its relocalization to dispersed trans-Golgi network (dTGN) vesicle membranes and formation of an active inflammasome complex. Associates with dTGN vesicle membranes by binding to phosphatidylinositol 4-phosphate (PtdIns4P). Shows ATPase activity. Functionally, independently of inflammasome activation, regulates the differentiation of T helper 2 (Th2) cells and has a role in Th2 cell-dependent asthma and tumor growth. During Th2 differentiation, required for optimal IRF4 binding to IL4 promoter and for IRF4-dependent IL4 transcription. Binds to the consensus DNA sequence 5'-GRRGGNRGAG-3'. May also participate in the transcription of IL5, IL13, GATA3, CCR3, CCR4 and MAF. This chain is NACHT, LRR and PYD domains-containing protein 3, found in Mus musculus (Mouse).